Reading from the N-terminus, the 587-residue chain is Prolycopene isomerase 1, chloroplastic (587 aa).

A compositionally biased stretch (low complexity) spans M1–P13. A disordered region spans residues M1–S21. Residues M1 to V50 constitute a chloroplast transit peptide.

Belongs to the carotenoid/retinoid oxidoreductase family. CrtISO subfamily. NAD(+) is required as a cofactor. NADP(+) serves as cofactor. The cofactor is FAD. As to expression, up-regulated in the flower buds and flower lip tissue, while it is weakly expressed in leaves.

It is found in the plastid. The protein resides in the chloroplast membrane. It carries out the reaction 7,7',9,9'-tetra-cis-lycopene = all-trans-lycopene. It functions in the pathway carotenoid biosynthesis; lycopene biosynthesis. In terms of biological role, carotene cis-trans-isomerase that converts 7,9,9'-tri-cis-neurosporene to 9'-cis-neurosporene and 7,9,9',7'-tetra-cis-lycopene (also known as prolycopene) into all-trans-lycopene. Isomerization requires redox-active components, suggesting that isomerization is achieved by a reversible redox reaction acting at specific double bonds. Isomerizes adjacent cis-double bonds at C7 and C9 pairwise into the trans-configuration, but is incapable of isomerizing single cis-double bonds at C9 and C9'. In Oncidium hybrid cultivar (Orchid), this protein is Prolycopene isomerase 1, chloroplastic (CRTISO1).